Reading from the N-terminus, the 180-residue chain is Large ribosomal subunit protein eL18 (180 aa).

A disordered region spans residues 152–180 (FGPAPGVPGSHTKPYVISKSRERTNAHRA). Basic and acidic residues predominate over residues 170 to 180 (KSRERTNAHRA).

Belongs to the eukaryotic ribosomal protein eL18 family.

Its subcellular location is the cytoplasm. The protein is Large ribosomal subunit protein eL18 (RPL18) of Taenia asiatica (Asian tapeworm).